Here is a 558-residue protein sequence, read N- to C-terminus: Inositol-3-phosphate synthase 1 (558 aa).

Positions 67, 68, 69, 70, 141, 177, 178, 188, 191, 228, 229, 230, 231, 278, 279, 303, 306, 337, 338, 339, and 352 each coordinate NAD(+). Ser279 is subject to Phosphoserine. Phosphoserine is present on Ser357. NAD(+)-binding residues include Gly390, Asp391, Asp419, and Ser420. A disordered region spans residues 537–558 (ATNGCTGDANGHLQEEPPMPTT).

The protein belongs to the myo-inositol 1-phosphate synthase family. The cofactor is NAD(+). Phosphorylation at Ser-279 and Ser-357 may be associated with a decrease in activity. As to expression, highly expressed in testis, ovary, heart, placenta and pancreas. Weakly expressed in blood leukocyte, thymus, skeletal muscle and colon.

Its subcellular location is the cytoplasm. The enzyme catalyses D-glucose 6-phosphate = 1D-myo-inositol 3-phosphate. Its pathway is polyol metabolism; myo-inositol biosynthesis; myo-inositol from D-glucose 6-phosphate: step 1/2. Inhibited by mood-stabilizing drugs such as valproate (VPA) and lithium. In terms of biological role, key enzyme in myo-inositol biosynthesis pathway that catalyzes the conversion of glucose 6-phosphate to 1-myo-inositol 1-phosphate in a NAD-dependent manner. Rate-limiting enzyme in the synthesis of all inositol-containing compounds. This Homo sapiens (Human) protein is Inositol-3-phosphate synthase 1 (ISYNA1).